Consider the following 396-residue polypeptide: Phosphoglycerate kinase (396 aa).

Substrate contacts are provided by residues 23-25, arginine 38, 61-64, arginine 122, and arginine 155; these read DFN and HMGK. ATP-binding positions include lysine 206, glycine 296, glutamate 327, and 353–356; that span reads GGDS.

Belongs to the phosphoglycerate kinase family. As to quaternary structure, monomer.

The protein resides in the cytoplasm. The catalysed reaction is (2R)-3-phosphoglycerate + ATP = (2R)-3-phospho-glyceroyl phosphate + ADP. It participates in carbohydrate degradation; glycolysis; pyruvate from D-glyceraldehyde 3-phosphate: step 2/5. This is Phosphoglycerate kinase from Clostridium botulinum (strain Alaska E43 / Type E3).